A 150-amino-acid polypeptide reads, in one-letter code: Calmodulin (150 aa).

4 consecutive EF-hand domains span residues 9-44 (EQIA…LGQS), 45-80 (PTAA…KMKD), 82-117 (DNEE…LGER), and 118-150 (LSQE…ISSK). 19 residues coordinate Ca(2+): Asp22, Asp24, Asp26, Asn28, Glu33, Asp58, Asp60, Asn62, Thr64, Glu69, Asp95, Asp97, Asn99, Tyr101, Glu106, Asp131, Asp133, Asp135, and Glu142.

Belongs to the calmodulin family. Interacts with rng2.

Its subcellular location is the cytoplasm. It localises to the cytoskeleton. The protein localises to the microtubule organizing center. It is found in the spindle pole body. In terms of biological role, calmodulin mediates the control of a large number of enzymes, ion channels and other proteins by Ca(2+). Among the enzymes to be stimulated by the calmodulin-Ca(2+) complex are a number of protein kinases and phosphatases. The polypeptide is Calmodulin (cam1) (Schizosaccharomyces pombe (strain 972 / ATCC 24843) (Fission yeast)).